A 316-amino-acid polypeptide reads, in one-letter code: HPr kinase/phosphorylase (316 aa).

Residues H143 and K164 contribute to the active site. 158-165 lines the ATP pocket; sequence GEAGSGKS. A Mg(2+)-binding site is contributed by S165. D182 functions as the Proton acceptor; for phosphorylation activity. Proton donor; for dephosphorylation activity in the catalytic mechanism. The tract at residues 206-215 is important for the catalytic mechanism of both phosphorylation and dephosphorylation; that stretch reads LEVRGLGVLN. Residue E207 participates in Mg(2+) binding. R251 is a catalytic residue. The interval 272-277 is important for the catalytic mechanism of dephosphorylation; it reads PVMPGR.

It belongs to the HPrK/P family. Homohexamer. Mg(2+) serves as cofactor.

It carries out the reaction [HPr protein]-L-serine + ATP = [HPr protein]-O-phospho-L-serine + ADP + H(+). The catalysed reaction is [HPr protein]-O-phospho-L-serine + phosphate + H(+) = [HPr protein]-L-serine + diphosphate. Functionally, catalyzes the ATP- as well as the pyrophosphate-dependent phosphorylation of a specific serine residue in HPr, a phosphocarrier protein of the phosphoenolpyruvate-dependent sugar phosphotransferase system (PTS). HprK/P also catalyzes the pyrophosphate-producing, inorganic phosphate-dependent dephosphorylation (phosphorolysis) of seryl-phosphorylated HPr (P-Ser-HPr). The chain is HPr kinase/phosphorylase from Xylella fastidiosa (strain 9a5c).